The chain runs to 449 residues: 3-phosphoshikimate 1-carboxyvinyltransferase (449 aa).

Positions 28, 29, and 33 each coordinate 3-phosphoshikimate. K28 is a binding site for phosphoenolpyruvate. The phosphoenolpyruvate site is built by G105 and R133. S179, Q181, D332, and K359 together coordinate 3-phosphoshikimate. Phosphoenolpyruvate is bound at residue Q181. D332 (proton acceptor) is an active-site residue. The phosphoenolpyruvate site is built by R363 and R406.

This sequence belongs to the EPSP synthase family. As to quaternary structure, monomer.

It is found in the cytoplasm. It catalyses the reaction 3-phosphoshikimate + phosphoenolpyruvate = 5-O-(1-carboxyvinyl)-3-phosphoshikimate + phosphate. The protein operates within metabolic intermediate biosynthesis; chorismate biosynthesis; chorismate from D-erythrose 4-phosphate and phosphoenolpyruvate: step 6/7. Its function is as follows. Catalyzes the transfer of the enolpyruvyl moiety of phosphoenolpyruvate (PEP) to the 5-hydroxyl of shikimate-3-phosphate (S3P) to produce enolpyruvyl shikimate-3-phosphate and inorganic phosphate. This Nitrobacter winogradskyi (strain ATCC 25391 / DSM 10237 / CIP 104748 / NCIMB 11846 / Nb-255) protein is 3-phosphoshikimate 1-carboxyvinyltransferase.